The sequence spans 1026 residues: Isoleucine--tRNA ligase (1026 aa).

Residues 51–61 carry the 'HIGH' region motif; sequence PTANGRPHIGH. The short motif at 591 to 595 is the 'KMSKS' region element; that stretch reads KMSKS. Lys594 lines the ATP pocket.

The protein belongs to the class-I aminoacyl-tRNA synthetase family. IleS type 2 subfamily. In terms of assembly, monomer. It depends on Zn(2+) as a cofactor.

Its subcellular location is the cytoplasm. It catalyses the reaction tRNA(Ile) + L-isoleucine + ATP = L-isoleucyl-tRNA(Ile) + AMP + diphosphate. In terms of biological role, catalyzes the attachment of isoleucine to tRNA(Ile). As IleRS can inadvertently accommodate and process structurally similar amino acids such as valine, to avoid such errors it has two additional distinct tRNA(Ile)-dependent editing activities. One activity is designated as 'pretransfer' editing and involves the hydrolysis of activated Val-AMP. The other activity is designated 'posttransfer' editing and involves deacylation of mischarged Val-tRNA(Ile). This chain is Isoleucine--tRNA ligase, found in Thermoplasma acidophilum (strain ATCC 25905 / DSM 1728 / JCM 9062 / NBRC 15155 / AMRC-C165).